The chain runs to 532 residues: Alkaline phosphatase (532 aa).

Positions methionine 1–serine 20 are disordered. A helical; Signal-anchor for type II membrane protein membrane pass occupies residues tryptophan 27–phenylalanine 47. Aspartate 68 lines the Mg(2+) pocket. Aspartate 68 is a Zn(2+) binding site. The active-site Phosphoserine intermediate is serine 115. Mg(2+) contacts are provided by aspartate 166, threonine 168, and glutamate 306. Zn(2+)-binding residues include aspartate 311, histidine 315, aspartate 352, histidine 353, and histidine 456.

It belongs to the alkaline phosphatase family. Mg(2+) serves as cofactor. Zn(2+) is required as a cofactor.

The protein localises to the membrane. The enzyme catalyses a phosphate monoester + H2O = an alcohol + phosphate. This Schizosaccharomyces pombe (strain 972 / ATCC 24843) (Fission yeast) protein is Alkaline phosphatase.